A 129-amino-acid chain; its full sequence is MLPLSLLKTAQGHPMLVELKNGETYNGHLVNCDTWMNIHLREVICTSKDGDRFWRMPECYIRGNTIKYLRVPDEVIDKVQEEKTRTDRKPPGVGRGRGRGVDDGGARGRGRGTSMGKMGGNRGAGRGRG.

Positions 2-75 (LPLSLLKTAQ…IKYLRVPDEV (74 aa)) constitute a Sm domain. The segment covering 79-90 (VQEEKTRTDRKP) has biased composition (basic and acidic residues). The interval 79–129 (VQEEKTRTDRKPPGVGRGRGRGVDDGGARGRGRGTSMGKMGGNRGAGRGRG) is disordered. The span at 111–129 (RGTSMGKMGGNRGAGRGRG) shows a compositional bias: gly residues.

Belongs to the snRNP Sm proteins family. In terms of assembly, component of the heptameric LSM1-LSM7 complex that forms a seven-membered ring structure with a donut shape. The LSM subunits are arranged in the order LSM1, LSM2, LSM3, LSM6, LSM5, LSM7 and LSM4. LSM4 subunit interacts only with its two neighboring subunits, LSM1A or LSM1B and LSM7. Component of the heptameric LSM2-LSM8 complex that forms a seven-membered ring structure with a donut shape. The LSM subunits are arranged in the order LSM8, LSM2, LSM3, LSM6, LSM5, LSM7 and LSM4. LSM4 subunit interacts only with its two neighboring subunits, LSM8 and LSM7. In terms of processing, methylated by PMRT15/SKB1 in response to salt stress or abscisic acid (ABA) treatment. As to expression, expressed in roots, leaves, stems, flowers and siliques.

The protein resides in the cytoplasm. Its subcellular location is the nucleus. Functionally, component of LSM protein complexes, which are involved in RNA processing. Component of the cytoplasmic LSM1-LSM7 complex which is involved in mRNA degradation by promoting decapping and leading to accurate 5'-3' mRNA decay. The cytoplasmic LSM1-LSM7 complex regulates developmental gene expression by the decapping of specific development-related transcripts. Component of the nuclear LSM2-LSM8 complex which is involved splicing nuclear mRNAs. LSM2-LSM8 binds directly to the U6 small nuclear RNAs (snRNAs) and is essential for accurate splicing of selected development-related mRNAs through the stabilization of the spliceosomal U6 snRNA. Plays a critical role in the regulation of development-related gene expression. The sequence is that of Sm-like protein LSM4 from Arabidopsis thaliana (Mouse-ear cress).